The sequence spans 370 residues: Glutamate 5-kinase (370 aa).

Lys-12 serves as a coordination point for ATP. Substrate-binding residues include Ser-52, Asp-139, and Asn-151. ATP-binding positions include 171-172 and 213-219; these read SD and TGGMFTK. The region spanning 278–356 is the PUA domain; sequence QAHIAVDAGA…SDIESILGYS (79 aa).

It belongs to the glutamate 5-kinase family.

It is found in the cytoplasm. It carries out the reaction L-glutamate + ATP = L-glutamyl 5-phosphate + ADP. The protein operates within amino-acid biosynthesis; L-proline biosynthesis; L-glutamate 5-semialdehyde from L-glutamate: step 1/2. Functionally, catalyzes the transfer of a phosphate group to glutamate to form L-glutamate 5-phosphate. This is Glutamate 5-kinase from Herpetosiphon aurantiacus (strain ATCC 23779 / DSM 785 / 114-95).